We begin with the raw amino-acid sequence, 513 residues long: 2-isopropylmalate synthase (513 aa).

The region spanning 5-268 is the Pyruvate carboxyltransferase domain; the sequence is LIIFDTTLRD…DVGIDTTQIV (264 aa). Mn(2+)-binding residues include Asp14, His202, His204, and Asn239. Positions 394–513 are regulatory domain; sequence RFISLSQRSE…KAVQKINPQI (120 aa).

Belongs to the alpha-IPM synthase/homocitrate synthase family. LeuA type 1 subfamily. In terms of assembly, homodimer. Requires Mn(2+) as cofactor.

Its subcellular location is the cytoplasm. The catalysed reaction is 3-methyl-2-oxobutanoate + acetyl-CoA + H2O = (2S)-2-isopropylmalate + CoA + H(+). Its pathway is amino-acid biosynthesis; L-leucine biosynthesis; L-leucine from 3-methyl-2-oxobutanoate: step 1/4. Catalyzes the condensation of the acetyl group of acetyl-CoA with 3-methyl-2-oxobutanoate (2-ketoisovalerate) to form 3-carboxy-3-hydroxy-4-methylpentanoate (2-isopropylmalate). The sequence is that of 2-isopropylmalate synthase from Cupriavidus metallidurans (strain ATCC 43123 / DSM 2839 / NBRC 102507 / CH34) (Ralstonia metallidurans).